The chain runs to 787 residues: Protocadherin beta-15 (787 aa).

An N-terminal signal peptide occupies residues 1–26 (MEPAGERFPEQRQVLILLLLLEVTLA). Topologically, residues 27–690 (GWEPRRYSVM…AQADSLTVYL (664 aa)) are extracellular. Cadherin domains lie at 35–133 (VMEE…SPEF), 138–242 (MTLK…APEF), 247–347 (YEVQ…FPEL), 352–451 (LTSP…APAF), and 456–561 (YTLF…SPFV). Asn418 carries N-linked (GlcNAc...) asparagine glycosylation. Asn567 carries N-linked (GlcNAc...) asparagine glycosylation. One can recognise a Cadherin 6 domain in the interval 568–671 (GSAPCTELVP…LVDGFSQPYL (104 aa)). A helical transmembrane segment spans residues 691–711 (VVALASVSSLFLFSVFLFVAV). At 712–787 (RLCRRSRAAS…DSRRKSEFLE (76 aa)) the chain is on the cytoplasmic side.

The protein resides in the cell membrane. Its function is as follows. Potential calcium-dependent cell-adhesion protein. May be involved in the establishment and maintenance of specific neuronal connections in the brain. This is Protocadherin beta-15 (PCDHB15) from Homo sapiens (Human).